The chain runs to 389 residues: S-adenosylmethionine synthase (389 aa).

His-17 serves as a coordination point for ATP. Residue Asp-19 participates in Mg(2+) binding. Glu-45 contacts K(+). Residues Glu-58 and Gln-102 each coordinate L-methionine. Positions 102–112 (QSADIAQGVDA) are flexible loop. Residues 167 to 169 (DAK), Asp-241, 247 to 248 (RK), Ala-264, and Lys-268 contribute to the ATP site. L-methionine is bound at residue Asp-241. Lys-272 provides a ligand contact to L-methionine.

Belongs to the AdoMet synthase family. As to quaternary structure, homotetramer; dimer of dimers. The cofactor is Mg(2+). It depends on K(+) as a cofactor.

The protein localises to the cytoplasm. The enzyme catalyses L-methionine + ATP + H2O = S-adenosyl-L-methionine + phosphate + diphosphate. Its pathway is amino-acid biosynthesis; S-adenosyl-L-methionine biosynthesis; S-adenosyl-L-methionine from L-methionine: step 1/1. Functionally, catalyzes the formation of S-adenosylmethionine (AdoMet) from methionine and ATP. The overall synthetic reaction is composed of two sequential steps, AdoMet formation and the subsequent tripolyphosphate hydrolysis which occurs prior to release of AdoMet from the enzyme. This is S-adenosylmethionine synthase from Parvibaculum lavamentivorans (strain DS-1 / DSM 13023 / NCIMB 13966).